The chain runs to 471 residues: Isochorismate synthase MenF (471 aa).

K226 (proton acceptor) is an active-site residue. E275 functions as the Proton donor in the catalytic mechanism. Mg(2+) contacts are provided by E319 and E454.

This sequence belongs to the isochorismate synthase family. Requires Mg(2+) as cofactor.

The catalysed reaction is chorismate = isochorismate. The protein operates within quinol/quinone metabolism; 1,4-dihydroxy-2-naphthoate biosynthesis; 1,4-dihydroxy-2-naphthoate from chorismate: step 1/7. Its pathway is quinol/quinone metabolism; menaquinone biosynthesis. Catalyzes the conversion of chorismate to isochorismate. This is Isochorismate synthase MenF from Bacillus subtilis (strain 168).